The following is a 108-amino-acid chain: UPF0145 protein YjfJ (108 aa).

Belongs to the UPF0145 family.

The protein is UPF0145 protein YjfJ (yjfJ) of Lactococcus lactis subsp. lactis (strain IL1403) (Streptococcus lactis).